A 316-amino-acid polypeptide reads, in one-letter code: L-lactate dehydrogenase (316 aa).

NAD(+) is bound by residues 13–15 (GMI), 34–36 (FDI), Y67, and 79–83 (TAGFT). Position 95 (R95) interacts with substrate. Residues 125-127 (VTN), L150, and L154 each bind NAD(+). R158 and H182 together coordinate substrate. H182 is a binding site for NAD(+). The active-site Proton acceptor is the H182.

This sequence belongs to the LDH/MDH superfamily. LDH family. As to quaternary structure, homotetramer.

It carries out the reaction (S)-lactate + NAD(+) = pyruvate + NADH + H(+). It participates in fermentation; pyruvate fermentation to lactate; (S)-lactate from pyruvate: step 1/1. The protein is L-lactate dehydrogenase of Plasmodium berghei.